Consider the following 557-residue polypeptide: Low affinity inorganic phosphate transporter 8 (557 aa).

Residues 1 to 20 lie on the Cytoplasmic side of the membrane; it reads MATSHGVLRSLDNAKTQSYH. The chain crosses the membrane as a helical span at residues 21–41; it reads YLAIVIAGMGFFTDAYDLFCI. Residues 42–70 lie on the Extracellular side of the membrane; the sequence is TAVTKLIGRLYYSDPTNHSPGILPTNVNN. The chain crosses the membrane as a helical span at residues 71–91; that stretch reads AITGVALCGTLAGQLFFGWLG. The Cytoplasmic segment spans residues 92 to 98; that stretch reads DKLGRKK. A helical transmembrane segment spans residues 99–119; that stretch reads VYGITLTTMVGFALLSGLSFG. Residues 120–130 are Extracellular-facing; it reads STPKTVVTSLC. Residues 131–151 form a helical membrane-spanning segment; it reads FFRFWLGFGIGGDYPLSAVIM. Over 152–162 the chain is Cytoplasmic; it reads SEYANQKTRGS. Residues 163 to 183 traverse the membrane as a helical segment; the sequence is FIAAVFAMQGVGILVAGGVAM. Residues 184-210 lie on the Extracellular side of the membrane; the sequence is FVSKLFLLYFPAPDFETDAVLSTQPEG. A helical membrane pass occupies residues 211–231; it reads DFVWRIVLMFGAVPAALTYYW. Residues 232-294 are Cytoplasmic-facing; sequence RMKMPETARY…LFSSEFLNRH (63 aa). A helical membrane pass occupies residues 295–315; it reads GLHLLGTTSTWFLLDIAFYSL. At 316 to 346 the chain is on the extracellular side; it reads QLTQKDIYPTSGLVYKASKMNAIEEVFQLSR. Residues 347-367 traverse the membrane as a helical segment; sequence AMFAVALIATVPGYWCTVFLI. Over 368-369 the chain is Cytoplasmic; that stretch reads EK. The chain crosses the membrane as a helical span at residues 370–390; it reads IGRFRIQLIGFLVMSVCMWFL. Topologically, residues 391–414 are extracellular; that stretch reads GHNYRSFRGEESACKNGSKYSFCN. Residue N406 is glycosylated (N-linked (GlcNAc...) asparagine). A helical transmembrane segment spans residues 415-435; sequence GNPVMFAILFGLTLFFANFGP. Residues 436–457 lie on the Cytoplasmic side of the membrane; sequence NSTTFIVPAELFPARLRSTCHG. Residues 458 to 478 traverse the membrane as a helical segment; that stretch reads ISAAAGKSGAIVGAFGVQSYI. The Extracellular segment spans residues 479–490; the sequence is GNSHDKSKGTKQ. The helical transmembrane segment at 491–511 threads the bilayer; sequence AIMALAVVNLLGFFFTFLVPE. Residues 512–557 lie on the Cytoplasmic side of the membrane; sequence TQGRSLEEISGEEKDFQGNNADEEISGERNGTRNASVDKSPETSMV. The segment at 519 to 557 is disordered; it reads EISGEEKDFQGNNADEEISGERNGTRNASVDKSPETSMV. The span at 543–557 shows a compositional bias: polar residues; sequence TRNASVDKSPETSMV.

The protein belongs to the major facilitator superfamily. Phosphate:H(+) symporter (TC 2.A.1.9) family.

Its subcellular location is the cell membrane. The enzyme catalyses phosphate(in) + H(+)(in) = phosphate(out) + H(+)(out). In terms of biological role, low-affinity transporter for external inorganic phosphate (Pi) that may be involved in the acquisition of phosphate released by arbuscular mycorrhizal (AM) fungi (e.g. Glomus versiforme and G.intraradices) during AM symbiosis; not required for mycorrhizal arbuscule development. In Medicago truncatula (Barrel medic), this protein is Low affinity inorganic phosphate transporter 8.